A 272-amino-acid polypeptide reads, in one-letter code: Soluble interferon gamma receptor OPG193 (272 aa).

The first 13 residues, 1–13 (MRYIIILAVLFIN), serve as a signal peptide directing secretion. Asparagine 42, asparagine 150, and asparagine 267 each carry an N-linked (GlcNAc...) asparagine; by host glycan.

It belongs to the type II cytokine receptor family. As to quaternary structure, homodimer. Interacts with host IFNG.

The protein resides in the secreted. In terms of biological role, counteracts the antiviral effects of host IFN-gamma. Acts as a soluble IFN-gamma receptor and thus inhibits the interaction between host IFN-gamma and its receptor. The protein is Soluble interferon gamma receptor OPG193 (OPG193) of Homo sapiens (Human).